The chain runs to 394 residues: MDRPPPDQQRQKQAPLFSPYQMPRFRLNHRVVLAPMTRCRAIGGVPGPALAEYYAQRTTQGGLLISEGTVVSPAGPGFPHVPGIYNQEQTDAWKKVVDAVHAKGGIFFCQLWHVGRASHQVYQPNGAAPISSTDKPISARWRILMPDGSYGKYPKPRRLAASEIPEIVEQYRQAAINAIEAGFDGIEIHGAHGYIIDQFLKDGINDRTDEYGGSLSNRCRFLLEVTRAVVSAIGADRVAVRISPAIDHLDAYDSDPIKLGMAVVERLNALQQQSGRLAYLHVTQPRYTAYGQTESGQHGSAEEESRLMRTLRGTYQGTFMCSGGYTRELGLEAVESGDADLVSYGRLFISNPDLVERFRLNAGLNKYVRKTFYTPDPVVGYTDYPFLGQPKSRM.

Residues 35–37 (PMT) and Gln-110 contribute to the FMN site. Position 189–192 (189–192 (HGAH)) interacts with substrate. Tyr-194 acts as the Proton donor in catalysis. Arg-241 provides a ligand contact to FMN. Arg-286 contacts substrate. FMN is bound by residues Gly-324 and 345 to 346 (GR). The Microbody targeting signal motif lies at 392–394 (SRM).

This sequence belongs to the NADH:flavin oxidoreductase/NADH oxidase family. FMN serves as cofactor.

The protein localises to the peroxisome. The enzyme catalyses (1S,2S)-OPC-8 + NADP(+) = (9S,13S,15Z)-12-oxophyto-10,15-dienoate + NADPH + H(+). It functions in the pathway lipid metabolism; oxylipin biosynthesis. Functionally, involved in the biosynthesis of jasmonate (JA) and perhaps in biosynthesis or metabolism of other oxylipin signaling moleclules. In vitro, reduces cis(+)-12-oxophytodienoic acid (cis(+)-OPDA) and cis(-)-OPDA to cis(+)-OPC-8:0 and cis(-)-OPC-8:0, respectively. May be required for the spatial and temporal regulation of JA levels during dehiscence of anthers, promoting the stomium degeneration program. Involved in carbohydrate transport underlying normal lodicule function during anthesis. This Oryza sativa subsp. japonica (Rice) protein is 12-oxophytodienoate reductase 7.